The primary structure comprises 48 residues: Protein YodE (48 aa).

The protein is Protein YodE of Escherichia coli (strain K12).